A 623-amino-acid polypeptide reads, in one-letter code: Laccase-1 (623 aa).

A signal peptide spans 1 to 22; it reads MKTFTSALALVVGMLAPGAVVA. Residues 23–50 constitute a propeptide that is removed on maturation; the sequence is APPSTPAQRDLVELREARQEGGKDLRPR. The cysteines at positions 54 and 62 are disulfide-linked. N-linked (GlcNAc...) asparagine glycans are attached at residues Asn89 and Asn138. The Cu cation site is built by His143, His145, His188, and His190. Cystine bridges form between Cys164–Cys590 and Cys348–Cys382. 4 N-linked (GlcNAc...) asparagine glycosylation sites follow: Asn251, Asn266, Asn294, and Asn339. Asn426 and Asn446 each carry an N-linked (GlcNAc...) asparagine glycan. The Cu cation site is built by His481, His484, His486, His552, Cys553, His554, and His558. Residues 610 to 623 constitute a propeptide that is removed on maturation; that stretch reads KRRRWVEESEWLVR.

Belongs to the multicopper oxidase family. In terms of assembly, monomer. Requires Cu cation as cofactor. Secreted protein; extracellular space.

It carries out the reaction 4 hydroquinone + O2 = 4 benzosemiquinone + 2 H2O. In terms of biological role, lignin degradation and detoxification of lignin-derived products. The protein is Laccase-1 (LAC1) of Melanocarpus albomyces.